A 316-amino-acid polypeptide reads, in one-letter code: Probable metal transport system membrane protein TC_0342 (316 aa).

10 consecutive transmembrane segments (helical) span residues 1 to 21 (MFAS…IVFF), 39 to 59 (IQVI…TFLV), 64 to 84 (AMYA…ACLF), 94 to 114 (QNLT…IHFI), 124 to 144 (ASTA…LVFL), 171 to 191 (FLVL…FICV), 196 to 216 (VFAF…MFLL), 226 to 246 (AVGV…AKLI), 252 to 272 (EMMG…PALS), and 286 to 306 (SGLA…TVFV).

The protein belongs to the ABC-3 integral membrane protein family.

The protein resides in the cell inner membrane. Its function is as follows. Part of an ATP-driven transport system TC_0338/TC_0339/TC_0341/TC_0342 for a metal. The sequence is that of Probable metal transport system membrane protein TC_0342 from Chlamydia muridarum (strain MoPn / Nigg).